The following is a 734-amino-acid chain: Mechanosensitive ion channel protein 10 (734 aa).

Disordered stretches follow at residues 1 to 75 and 115 to 136; these read MAEQ…LTQR and SFSRASPNNKSNRSVGSPAPVT. Basic and acidic residues predominate over residues 24–39; the sequence is EASRRSKEMASPESEK. Phosphoserine is present on S34. Polar residues-rich tracts occupy residues 65 to 75 and 117 to 129; these read PNQNNVGLTQR and SRASPNNKSNRSV. Phosphoserine is present on residues S128 and S131. The next 6 membrane-spanning stretches (helical) occupy residues 164 to 184, 196 to 216, 249 to 269, 288 to 308, 516 to 536, and 551 to 571; these read ISTLALIESAFFVVILSALVA, FWGLEVWKWCVLVMVIFSGML, SVQVFIWLCLILVAWILLFNH, LISILTGAFFWLVKTLLLKIL, LVTAILMVVTVVIWLLLLEVA, and LAFIIGSTCKNLFESIVFVFV.

The protein belongs to the MscS (TC 1.A.23) family. In terms of tissue distribution, detected in the root tip and throughout the vasculature of the root and leaf.

It localises to the cell membrane. Mechanosensitive channel that opens in response to stretch forces in the membrane lipid bilayer. In Arabidopsis thaliana (Mouse-ear cress), this protein is Mechanosensitive ion channel protein 10 (MSL10).